A 210-amino-acid polypeptide reads, in one-letter code: Synaptosomal-associated protein 25 (210 aa).

The segment at 1–23 (MENSVENSMDPRSEQEEMQRCAD) is disordered. Residues 9–20 (MDPRSEQEEMQR) show a composition bias toward basic and acidic residues. T-SNARE coiled-coil homology domains lie at 23-85 (DQIT…LSDL) and 147-209 (DARE…ATKM).

This sequence belongs to the SNAP-25 family.

The protein resides in the synapse. It is found in the synaptosome. The protein localises to the cell membrane. Its function is as follows. May play an important role in the synaptic function of specific neuronal systems. Associates with proteins involved in vesicle docking and membrane fusion. The protein is Synaptosomal-associated protein 25 (snap25) of Torpedo marmorata (Marbled electric ray).